Consider the following 577-residue polypeptide: Hemagglutinin-neuraminidase (577 aa).

Methionine 1 is modified (blocked amino end (Met); by host). Residues methionine 1–arginine 26 are Intravirion-facing. Residues isoleucine 27–methionine 48 form a helical membrane-spanning segment. The Virion surface portion of the chain corresponds to glycine 49–glycine 577. N-linked (GlcNAc...) asparagine; by host glycosylation occurs at asparagine 119. The interval glycine 124 to tyrosine 152 is important for interaction with fusion/F protein. Cystine bridges form between cysteine 172-cysteine 196, cysteine 186-cysteine 247, and cysteine 238-cysteine 251. Residues asparagine 234 to serine 239 are involved in neuraminidase activity. Residues asparagine 341 and asparagine 433 are each glycosylated (N-linked (GlcNAc...) asparagine; by host). 2 disulfide bridges follow: cysteine 344-cysteine 461 and cysteine 455-cysteine 465. 2 N-linked (GlcNAc...) asparagine; by host glycosylation sites follow: asparagine 481 and asparagine 538. The cysteines at positions 531 and 542 are disulfide-linked.

This sequence belongs to the paramyxoviruses hemagglutinin-neuraminidase family. In terms of assembly, homotetramer; composed of disulfide-linked homodimers. Interacts with F protein trimer. Interacts with host CG-1B; this interaction inhibits viral adsorption and replication rather than internalization.

Its subcellular location is the virion membrane. It is found in the host cell membrane. It catalyses the reaction Hydrolysis of alpha-(2-&gt;3)-, alpha-(2-&gt;6)-, alpha-(2-&gt;8)- glycosidic linkages of terminal sialic acid residues in oligosaccharides, glycoproteins, glycolipids, colominic acid and synthetic substrates.. Its function is as follows. Mediates the viral entry into the host cell together with fusion/F protein. Attaches the virus to sialic acid-containing cell receptors and thereby initiates infection. Binding of HN protein to the receptor induces a conformational change that allows the F protein to trigger virion/cell membranes fusion. In terms of biological role, neuraminidase activity ensures the efficient spread of the virus by dissociating the mature virions from the neuraminic acid containing glycoproteins. The chain is Hemagglutinin-neuraminidase (HN) from Gallus gallus (Chicken).